The following is a 436-amino-acid chain: Trigger factor (436 aa).

A PPIase FKBP-type domain is found at 161-246 (DLRVNMDFVG…LNKVEKQDLP (86 aa)).

Belongs to the FKBP-type PPIase family. Tig subfamily.

The protein resides in the cytoplasm. The catalysed reaction is [protein]-peptidylproline (omega=180) = [protein]-peptidylproline (omega=0). In terms of biological role, involved in protein export. Acts as a chaperone by maintaining the newly synthesized protein in an open conformation. Functions as a peptidyl-prolyl cis-trans isomerase. This Tolumonas auensis (strain DSM 9187 / NBRC 110442 / TA 4) protein is Trigger factor.